A 696-amino-acid polypeptide reads, in one-letter code: Lutropin-choriogonadotropic hormone receptor (696 aa).

The first 27 residues, 1–27, serve as a signal peptide directing secretion; that stretch reads MRRRSLALRLLLALLLLPPPLPQTLLG. Residues 28-358 lie on the Extracellular side of the membrane; the sequence is APCPEPCSCR…AFNPCEDIMG (331 aa). N-linked (GlcNAc...) asparagine glycosylation is present at Asn-99. 6 LRR repeats span residues 122 to 147, 149 to 171, 172 to 196, 198 to 220, 221 to 244, and 250 to 271; these read LPRLKYLSICNTGIRKLPDVTKIFSS, FNFILEICDNLHITTVPANAFQG, MNNESITLKLYGNGFEEIQSHAFNG, TLISLELKENAHLKKMHNDAFRG, ARGPSILDISSTKLQALPSYGLES, and ATSSYSLKKLPSREKFTNLLDA. 2 N-linked (GlcNAc...) asparagine glycosylation sites follow: Asn-174 and Asn-195. Asn-291, Asn-299, and Asn-313 each carry an N-linked (GlcNAc...) asparagine glycan. A Sulfotyrosine modification is found at Tyr-331. The helical transmembrane segment at 359–386 threads the bilayer; it reads YDFLRVLIWLINILAIMGNVTVLFVLLT. Topologically, residues 387-395 are cytoplasmic; that stretch reads SHYKLTVPR. The helical transmembrane segment at 396-418 threads the bilayer; sequence FLMCNLSFADFCMGLYLLLIASV. Over 419-439 the chain is Extracellular; sequence DAQTKGQYYNHAIDWQTGNGC. The cysteines at positions 439 and 514 are disulfide-linked. A helical transmembrane segment spans residues 440–462; sequence SVAGFFTVFASELSVYTLTVITL. The Cytoplasmic segment spans residues 463 to 482; that stretch reads ERWHTITYAIQLDQKLRLRH. Residues 483-505 form a helical membrane-spanning segment; sequence AIPIMLGGWLFSTLIAMLPLVGV. Residues 506–525 lie on the Extracellular side of the membrane; that stretch reads SSYMKVSICLPMDVETTLSQ. A helical membrane pass occupies residues 526 to 547; sequence VYILTILILNVVAFIIICACYI. Over 548-570 the chain is Cytoplasmic; that stretch reads KIYFAVQNPELMATNKDTKIAKK. Residues 571-594 traverse the membrane as a helical segment; sequence MAVLIFTDFTCMAPISFFAISAAL. Topologically, residues 595-605 are extracellular; sequence KVPLITVTNSK. The chain crosses the membrane as a helical span at residues 606–626; the sequence is VLLVLFYPVNSCANPFLYAIF. The Cytoplasmic portion of the chain corresponds to 627–696; the sequence is TKAFRRDFFL…VMDKTCYKDC (70 aa). Residues Cys-643 and Cys-644 are each lipidated (S-palmitoyl cysteine).

It belongs to the G-protein coupled receptor 1 family. FSH/LSH/TSH subfamily. Sulfated.

It is found in the cell membrane. Its function is as follows. Receptor for lutropin-choriogonadotropic hormone. The activity of this receptor is mediated by G proteins which activate adenylate cyclase. The sequence is that of Lutropin-choriogonadotropic hormone receptor (LHCGR) from Sus scrofa (Pig).